Here is a 514-residue protein sequence, read N- to C-terminus: Butyrophilin subfamily 2 member A2 (514 aa).

Residues 1–29 (MEPTTSLRSCPIASLLFFLVLSLFVLVSA) form the signal peptide. An Ig-like V-type domain is found at 30–142 (QFTVIGPAEP…SYDQATMKLM (113 aa)). At 30–244 (QFTVIGPAEP…ILIPESFVPS (215 aa)) the chain is on the extracellular side. Asn-47 and Asn-115 each carry an N-linked (GlcNAc...) asparagine glycan. Disulfide bonds link Cys-52-Cys-126 and Cys-166-Cys-220. The Ig-like C2-type domain maps to 150–232 (PLIKMKTLED…NNTLLSQEVE (83 aa)). Residues 245-265 (LPLWMVAVAVTLPVVMLILLT) form a helical membrane-spanning segment. The Cytoplasmic portion of the chain corresponds to 266–514 (SGSICLVKKH…PISQSLVRKP (249 aa)). A coiled-coil region spans residues 281 to 304 (ILSAEKEAEYEEKEAARQLQEELR). A B30.2/SPRY domain is found at 295-488 (AARQLQEELR…LFICPAFTGA (194 aa)).

This sequence belongs to the immunoglobulin superfamily. BTN/MOG family. Post-translationally, N-glycosylated. Widely expressed (at protein level). In the thymus, restricted to the corticomedullary junction, but not confined solely to epithelial cells (at protein level). Significant expression on naive B-cells, splenic natural killer cells, dendritic cells and peritoneal macrophages (at protein level). Negligible expression on naive T-cells up-regulated on activated T-cells (at protein level).

The protein resides in the membrane. In terms of biological role, inhibits the proliferation of CD4 and CD8 T-cells activated by anti-CD3 antibodies, T-cell metabolism and IL2 and IFNG secretion. In Mus musculus (Mouse), this protein is Butyrophilin subfamily 2 member A2 (Btn2a2).